The primary structure comprises 246 residues: Anamorsin homolog (246 aa).

An N-terminal SAM-like domain region spans residues 1 to 124; the sequence is MRVVVVDLDG…ARGTAFSLKS (124 aa). Residues 125 to 158 are linker; sequence RAVRVVTADAGWGADADVDDELIDESALLTELDV. [2Fe-2S] cluster-binding residues include Cys168, Cys177, Cys180, and Cys182. The fe-S binding site A stretch occupies residues 168–182; the sequence is CDVGAGKKACKNCTC. 4 residues coordinate [4Fe-4S] cluster: Cys206, Cys209, Cys217, and Cys220. 2 short sequence motifs (cx2C motif) span residues 206–209 and 217–220; these read CGNC and CAGC. Positions 206-220 are fe-S binding site B; the sequence is CGNCALGDAFRCAGC.

The protein belongs to the anamorsin family. Monomer. The cofactor is [2Fe-2S] cluster. Requires [4Fe-4S] cluster as cofactor.

The protein localises to the cytoplasm. It localises to the mitochondrion intermembrane space. Functionally, component of the cytosolic iron-sulfur (Fe-S) protein assembly (CIA) machinery. Required for the maturation of extramitochondrial Fe-S proteins. Part of an electron transfer chain functioning in an early step of cytosolic Fe-S biogenesis, facilitating the de novo assembly of a [4Fe-4S] cluster on the cytosolic Fe-S scaffold complex. Electrons are transferred from NADPH via a FAD- and FMN-containing diflavin oxidoreductase. Together with the diflavin oxidoreductase, also required for the assembly of the diferric tyrosyl radical cofactor of ribonucleotide reductase (RNR), probably by providing electrons for reduction during radical cofactor maturation in the catalytic small subunit. In Ostreococcus tauri, this protein is Anamorsin homolog.